We begin with the raw amino-acid sequence, 435 residues long: MAQEEEKDAGISKYISTTDEIIIGCKCWVEKDGEQRLAEILSINNRRQPPKFYVHYEDFNKRLDEWILASRINIEREVTFPKPRDPDEKKKKKQKKSATPQATDGETLESADIMDLENLNVQGLRDEGISRDDEIKKLRTSGSMTQNPHEVSRVRNLSKIIMGKHEIEPWYFSPYPIELTDEDVVYIDDFSLQYFGSKKQYARYRQKCTLRHPPGNEIYRDDYVSFFEIDGRKQRTWCRNLCLLSKLFLDHKTLYYDVDPFLFYCMTQRDELGHHLVGYFSKEKESADGYNVACILTLPQYQRMGYGRLLIEFSYELSKKENKVGSPEKPLSDLGLLSYRAYWSDTLIKLLVENGTEITIDEISSMTSLTTTDILHTAKALNILRYYKGQHILYLNEDVLLRYEKLIAKKRRSIDPEKLIWKPPIFTASQLRFAW.

The region spanning 22–73 (IIGCKCWVEKDGEQRLAEILSINNRRQPPKFYVHYEDFNKRLDEWILASRIN) is the Tudor-knot domain. The segment covering 78 to 89 (VTFPKPRDPDEK) has biased composition (basic and acidic residues). A disordered region spans residues 78–108 (VTFPKPRDPDEKKKKKQKKSATPQATDGETL). The MYST-type HAT domain occupies 152-423 (SRVRNLSKII…IDPEKLIWKP (272 aa)). The C2HC MYST-type; degenerate zinc-finger motif lies at 185 to 210 (VYIDDFSLQYFGSKKQYARYRQKCTL). The ESA1-RPD3 motif motif lies at 235–256 (RTWCRNLCLLSKLFLDHKTLYY). An N6-acetyllysine; by autocatalysis modification is found at K252. Acetyl-CoA-binding positions include 293-297 (ACILT) and 302-308 (QRMGYGR). E328 (proton donor/acceptor) is an active-site residue. Position 332 (S332) interacts with acetyl-CoA.

This sequence belongs to the MYST (SAS/MOZ) family. Component of the NuA4 histone acetyltransferase complex. Interacts with arp4. In terms of processing, autoacetylation at Lys-252 is required for proper function.

The protein resides in the nucleus. Its subcellular location is the chromosome. It carries out the reaction L-lysyl-[histone] + acetyl-CoA = N(6)-acetyl-L-lysyl-[histone] + CoA + H(+). It catalyses the reaction L-lysyl-[protein] + acetyl-CoA = N(6)-acetyl-L-lysyl-[protein] + CoA + H(+). The catalysed reaction is 2-hydroxyisobutanoyl-CoA + L-lysyl-[protein] = N(6)-(2-hydroxyisobutanoyl)-L-lysyl-[protein] + CoA + H(+). The enzyme catalyses (2E)-butenoyl-CoA + L-lysyl-[protein] = N(6)-(2E)-butenoyl-L-lysyl-[protein] + CoA + H(+). Catalytic component of the NuA4 histone acetyltransferase (HAT) complex which is involved in epigenetic transcriptional activation of selected genes principally by acetylation of nucleosomal histones H4, H3, H2B, H2A and H2A variant H2A.Z. Acetylates histone H4 to form H4K5ac, H4K8ac, H4K12ac and H4K16ac, histone H3 to form H3K14ac, and histone H2A to form H2AK4ac and H2AK7ac. The NuA4 complex is involved in the DNA damage response and is required for chromosome segregation. The NuA4 complex plays a direct role in repair of DNA double-strand breaks (DSBs) through homologous recombination. Recruitment to promoters depends on H3K4me. Also acetylates non-histone proteins. In addition to protein acetyltransferase, can use different acyl-CoA substrates, such as 2-hydroxyisobutanoyl-CoA (2-hydroxyisobutyryl-CoA) or (2E)-butenoyl-CoA (crotonyl-CoA), and is able to mediate protein 2-hydroxyisobutyrylation and crotonylation, respectively. The sequence is that of Histone acetyltransferase ESA1 (ESA1) from Eremothecium gossypii (strain ATCC 10895 / CBS 109.51 / FGSC 9923 / NRRL Y-1056) (Yeast).